We begin with the raw amino-acid sequence, 966 residues long: Collagen alpha-1(I) chain (966 aa).

Residues 1-966 are disordered; sequence SYGYDEKSAG…PGPPGPPGPP (966 aa). Lysine 7 bears the Allysine mark. Serine 8 bears the Phosphoserine mark. Residues proline 27, proline 30, proline 32, proline 41, proline 44, proline 47, proline 61, proline 76, proline 82, proline 91, and proline 97 each carry the 4-hydroxyproline modification. Residues 64-78 are compositionally biased toward basic and acidic residues; it reads NGDDGEAGKPGRPGE. Lysine 100 bears the 5-hydroxylysine; alternate mark. O-linked (Gal...) hydroxylysine; alternate glycosylation occurs at lysine 100. Residue serine 106 is modified to Phosphoserine. Positions 114–130 are enriched in low complexity; sequence DAGPAGPKGEPGSPGEN. 4-hydroxyproline is present on residues proline 124, proline 127, proline 133, proline 142, proline 148, proline 169, proline 178, proline 181, proline 208, proline 211, proline 223, proline 229, proline 238, proline 244, proline 247, and proline 262. The span at 148-166 shows a compositional bias: low complexity; that stretch reads PGASGPAGARGNDGATGAA. Over residues 168-180 the composition is skewed to pro residues; sequence PPGPTGPAGPPGF. Low complexity predominate over residues 214 to 253; it reads AGAAGPAGNPGADGQPGAKGANGAPGIAGAPGFPGARGPS. Lysine 265 carries the post-translational modification 5-hydroxylysine. A 4-hydroxyproline mark is found at proline 271, proline 274, proline 286, proline 295, proline 310, proline 316, proline 325, and proline 331. Positions 320–329 are enriched in gly residues; that stretch reads GERGGPGSRG. The residue at position 340 (lysine 340) is a 5-hydroxylysine. Proline 349, proline 358, proline 364, proline 370, proline 379, proline 382, proline 391, proline 400, proline 406, proline 418, proline 427, proline 436, proline 439, proline 457, proline 475, proline 481, proline 487, proline 493, proline 499, proline 505, proline 517, proline 526, proline 538, proline 542, proline 548, proline 554, and proline 563 each carry 4-hydroxyproline. The segment covering 373 to 399 has biased composition (low complexity); it reads KGLTGSPGSPGPDGKTGPPGPAGQDGR. Positions 408–427 are enriched in low complexity; sequence ARGQAGVMGFPGPKGAAGEP. Residues 469 to 496 are compositionally biased toward low complexity; it reads QGPAGSPGFQGLPGPAGPPGEAGKPGEQ. Position 575 is a 5-hydroxylysine (lysine 575). 4-hydroxyproline occurs at positions 581, 596, and 602. Residues 608-622 show a composition bias toward low complexity; sequence SGPSGPAGPTGARGA. Serine 611 is subject to Phosphoserine. 8 positions are modified to 4-hydroxyproline: proline 623, proline 629, proline 632, proline 641, proline 647, proline 665, proline 674, and proline 683. The segment covering 635–662 has biased composition (low complexity); the sequence is AGFAGPPGADGQPGAKGEPGDAGAKGDA. The span at 664–676 shows a compositional bias: pro residues; the sequence is PPGPAGPTGPPGP. Lysine 686 bears the 5-hydroxylysine mark. Residues 691–707 show a composition bias toward low complexity; it reads SAGPPGATGFPGAAGRV. A 4-hydroxyproline mark is found at proline 695 and proline 701. Position 709 is a 3-hydroxyproline (proline 709). Residues proline 710, proline 719, proline 722, proline 746, proline 755, proline 773, proline 782, proline 785, proline 791, proline 806, proline 812, proline 818, proline 826, and proline 832 each carry the 4-hydroxyproline modification. Over residues 736 to 755 the composition is skewed to low complexity; that stretch reads ETGPAGEKGSPGADGPAGAP. The segment covering 805-815 has biased composition (pro residues); sequence PPGPVGPPGLA. Residues 824 to 835 are compositionally biased toward gly residues; it reads EGPGAEGSPGRG. The segment covering 852 to 866 has biased composition (low complexity); the sequence is AGPAGARGPAGPQGP. Residues 867–881 are compositionally biased toward basic and acidic residues; that stretch reads RGDKGETGEQGDRGI. Lysine 870 bears the 5-hydroxylysine mark. Lysine 882 is subject to 5-hydroxylysine; alternate. Residue lysine 882 is glycosylated (O-linked (Gal...) hydroxylysine; alternate). Residues proline 897, proline 900, proline 918, and proline 933 each carry the 4-hydroxyproline modification. Residues 900–933 are compositionally biased toward low complexity; the sequence is PGEQGPSGASGPAGPRGPPGSAGSPGKDGLNGLP. 3-hydroxyproline is present on proline 938. Proline 939 bears the 4-hydroxyproline mark. A compositionally biased stretch (pro residues) spans 951–966; sequence VGPPGPPGPPGPPGPP. Proline 953 is subject to 3-hydroxyproline. Residue proline 954 is modified to 4-hydroxyproline. Residue proline 956 is modified to 3-hydroxyproline. Proline 957 is subject to 4-hydroxyproline. A 3-hydroxyproline modification is found at proline 959. A 4-hydroxyproline mark is found at proline 960, proline 963, and proline 966.

Belongs to the fibrillar collagen family. In terms of assembly, trimers of one alpha 2(I) and two alpha 1(I) chains. Contains mostly 4-hydroxyproline. Proline residues at the third position of the tripeptide repeating unit (G-X-Y) are hydroxylated in some or all of the chains. In terms of processing, contains 3-hydroxyproline at a few sites. This modification occurs on the first proline residue in the sequence motif Gly-Pro-Hyp, where Hyp is 4-hydroxyproline. Post-translationally, lysine residues at the third position of the tripeptide repeating unit (G-X-Y) are 5-hydroxylated in some or all of the chains. O-glycosylated on hydroxylated lysine residues. The O-linked glycan consists of a Glc-Gal disaccharide. As to expression, expressed in bones.

The protein localises to the secreted. It is found in the extracellular space. Its subcellular location is the extracellular matrix. Its function is as follows. Type I collagen is a member of group I collagen (fibrillar forming collagen). The sequence is that of Collagen alpha-1(I) chain from Bradypus variegatus (Brown-throated three-fingered sloth).